The following is a 124-amino-acid chain: Small ribosomal subunit protein uS11 (124 aa).

It belongs to the universal ribosomal protein uS11 family. Part of the 30S ribosomal subunit. Interacts with proteins S7 and S18. Binds to IF-3.

Functionally, located on the platform of the 30S subunit, it bridges several disparate RNA helices of the 16S rRNA. Forms part of the Shine-Dalgarno cleft in the 70S ribosome. This Sulfurovum sp. (strain NBC37-1) protein is Small ribosomal subunit protein uS11.